Consider the following 400-residue polypeptide: Phosphoglycerate kinase (400 aa).

Substrate is bound by residues 22-24 (DFN), arginine 38, 61-64 (HLGR), arginine 119, and arginine 152. ATP contacts are provided by residues lysine 205, glycine 296, glutamate 327, and 353–356 (GGDT).

Belongs to the phosphoglycerate kinase family. Monomer.

The protein resides in the cytoplasm. It carries out the reaction (2R)-3-phosphoglycerate + ATP = (2R)-3-phospho-glyceroyl phosphate + ADP. The protein operates within carbohydrate degradation; glycolysis; pyruvate from D-glyceraldehyde 3-phosphate: step 2/5. This is Phosphoglycerate kinase from Campylobacter jejuni subsp. doylei (strain ATCC BAA-1458 / RM4099 / 269.97).